The chain runs to 253 residues: Phosphate import ATP-binding protein PstB (253 aa).

In terms of domain architecture, ABC transporter spans 7-248 (IKVRDLNLYY…PRDRRTEDYI (242 aa)). 39-46 (GPSGCGKS) serves as a coordination point for ATP.

Belongs to the ABC transporter superfamily. Phosphate importer (TC 3.A.1.7) family. As to quaternary structure, the complex is composed of two ATP-binding proteins (PstB), two transmembrane proteins (PstC and PstA) and a solute-binding protein (PstS).

Its subcellular location is the cell membrane. The catalysed reaction is phosphate(out) + ATP + H2O = ADP + 2 phosphate(in) + H(+). In terms of biological role, part of the ABC transporter complex PstSACB involved in phosphate import. Responsible for energy coupling to the transport system. This chain is Phosphate import ATP-binding protein PstB, found in Carboxydothermus hydrogenoformans (strain ATCC BAA-161 / DSM 6008 / Z-2901).